The primary structure comprises 286 residues: Shikimate dehydrogenase (NADP(+)) (286 aa).

Shikimate is bound by residues 20 to 22 (SLS) and threonine 67. Catalysis depends on lysine 71, which acts as the Proton acceptor. The shikimate site is built by asparagine 92 and aspartate 107. NADP(+) is bound by residues 132–136 (GAGGA) and methionine 228. Residue tyrosine 230 participates in shikimate binding. Residue glycine 251 coordinates NADP(+).

The protein belongs to the shikimate dehydrogenase family. As to quaternary structure, homodimer.

It carries out the reaction shikimate + NADP(+) = 3-dehydroshikimate + NADPH + H(+). It participates in metabolic intermediate biosynthesis; chorismate biosynthesis; chorismate from D-erythrose 4-phosphate and phosphoenolpyruvate: step 4/7. In terms of biological role, involved in the biosynthesis of the chorismate, which leads to the biosynthesis of aromatic amino acids. Catalyzes the reversible NADPH linked reduction of 3-dehydroshikimate (DHSA) to yield shikimate (SA). The polypeptide is Shikimate dehydrogenase (NADP(+)) (Geobacter sulfurreducens (strain ATCC 51573 / DSM 12127 / PCA)).